Reading from the N-terminus, the 457-residue chain is Bifunctional F420 biosynthesis protein FbiB (457 aa).

A coenzyme F420:L-glutamate ligase region spans residues 1–253 (MTSSDSHRSA…NGPDDLFWLG (253 aa)). Residues 29–32 (LPEF), serine 59, and lysine 64 contribute to the GTP site. Position 118 (aspartate 118) interacts with a divalent metal cation. Residue asparagine 121 coordinates GTP. A divalent metal cation-binding residues include aspartate 159 and threonine 160. The tract at residues 254–457 (TTEALELGRQ…VRVADLLLRK (204 aa)) is dehydro-coenzyme F420-0 reductase. Residues 269–273 (RRSVR) and alanine 297 each bind FMN. Aspartate 329 is a coenzyme F420-(gamma-Glu)n binding site. Residues glycine 408 and arginine 445 each coordinate FMN.

The protein in the N-terminal section; belongs to the CofE family. Mg(2+) serves as cofactor. The cofactor is Mn(2+). K(+) is required as a cofactor.

The enzyme catalyses oxidized coenzyme F420-0 + GTP + L-glutamate = oxidized coenzyme F420-1 + GDP + phosphate + H(+). The catalysed reaction is oxidized coenzyme F420-1 + GTP + L-glutamate = oxidized coenzyme F420-2 + GDP + phosphate + H(+). It catalyses the reaction oxidized coenzyme F420-(gamma-L-Glu)(n) + GTP + L-glutamate = oxidized coenzyme F420-(gamma-L-Glu)(n+1) + GDP + phosphate + H(+). It carries out the reaction oxidized coenzyme F420-0 + FMN + H(+) = dehydro coenzyme F420-0 + FMNH2. It participates in cofactor biosynthesis; coenzyme F420 biosynthesis. In terms of biological role, bifunctional enzyme that catalyzes the GTP-dependent successive addition of multiple gamma-linked L-glutamates to the L-lactyl phosphodiester of 7,8-didemethyl-8-hydroxy-5-deazariboflavin (F420-0) to form polyglutamated F420 derivatives, and the FMNH2-dependent reduction of dehydro-F420-0 to form F420-0. This is Bifunctional F420 biosynthesis protein FbiB from Mycobacterium leprae (strain TN).